The chain runs to 611 residues: DNA mismatch repair protein MutL (611 aa).

The segment at 364–384 (NVNSKPSKYRPATSPTVPKYT) is disordered.

This sequence belongs to the DNA mismatch repair MutL/HexB family.

Functionally, this protein is involved in the repair of mismatches in DNA. It is required for dam-dependent methyl-directed DNA mismatch repair. May act as a 'molecular matchmaker', a protein that promotes the formation of a stable complex between two or more DNA-binding proteins in an ATP-dependent manner without itself being part of a final effector complex. The polypeptide is DNA mismatch repair protein MutL (Rickettsia bellii (strain OSU 85-389)).